A 785-amino-acid polypeptide reads, in one-letter code: Endonuclease MutS2 (785 aa).

334–341 (GPNTGGKT) lines the ATP pocket. Residues 710-785 (LDLRGKRYEE…GNGATIVHFK (76 aa)) form the Smr domain.

The protein belongs to the DNA mismatch repair MutS family. MutS2 subfamily. Homodimer. Binds to stalled ribosomes, contacting rRNA.

In terms of biological role, endonuclease that is involved in the suppression of homologous recombination and thus may have a key role in the control of bacterial genetic diversity. Its function is as follows. Acts as a ribosome collision sensor, splitting the ribosome into its 2 subunits. Detects stalled/collided 70S ribosomes which it binds and splits by an ATP-hydrolysis driven conformational change. Acts upstream of the ribosome quality control system (RQC), a ribosome-associated complex that mediates the extraction of incompletely synthesized nascent chains from stalled ribosomes and their subsequent degradation. Probably generates substrates for RQC. The protein is Endonuclease MutS2 of Pediococcus pentosaceus (strain ATCC 25745 / CCUG 21536 / LMG 10740 / 183-1w).